A 146-amino-acid polypeptide reads, in one-letter code: Neuropeptide Y receptor type 2 (146 aa).

Residues 1–8 (KMGPVLCH) are Extracellular-facing. C7 and C87 are oxidised to a cystine. A helical transmembrane segment spans residues 9-29 (LVPYAQGLAVQVSTITLTVIA). The Cytoplasmic portion of the chain corresponds to 30–49 (LDRHRCIVYHLESKISKQIS). The chain crosses the membrane as a helical span at residues 50 to 70 (FLIIGLAWGVSALLASPLAIF). Topologically, residues 71 to 100 (REYSLIEIIPDFEIVACTEKWPGEEKGIYG) are extracellular. Residues 101-121 (TVYSLLSLLILYVLPLGIISF) traverse the membrane as a helical segment. At 122 to 146 (SYARIWSKLKNHVSPGAAHDHYHQR) the chain is on the cytoplasmic side.

The protein belongs to the G-protein coupled receptor 1 family.

Its subcellular location is the cell membrane. Receptor for neuropeptide Y and peptide YY. The chain is Neuropeptide Y receptor type 2 (NPY2R) from Ovis aries (Sheep).